The sequence spans 41 residues: Photosystem II reaction center protein L (41 aa).

A helical transmembrane segment spans residues 20–40 (SLYWGLLLIFVLAVPFSNYFF).

The protein belongs to the PsbL family. As to quaternary structure, PSII is composed of 1 copy each of membrane proteins PsbA, PsbB, PsbC, PsbD, PsbE, PsbF, PsbH, PsbI, PsbJ, PsbK, PsbL, PsbM, PsbT, PsbX, PsbY, PsbZ, Psb30/Ycf12, at least 3 peripheral proteins of the oxygen-evolving complex and a large number of cofactors. It forms dimeric complexes.

The protein localises to the plastid. It is found in the chloroplast thylakoid membrane. Functionally, one of the components of the core complex of photosystem II (PSII). PSII is a light-driven water:plastoquinone oxidoreductase that uses light energy to abstract electrons from H(2)O, generating O(2) and a proton gradient subsequently used for ATP formation. It consists of a core antenna complex that captures photons, and an electron transfer chain that converts photonic excitation into a charge separation. This subunit is found at the monomer-monomer interface and is required for correct PSII assembly and/or dimerization. This chain is Photosystem II reaction center protein L, found in Pinus koraiensis (Korean pine).